Reading from the N-terminus, the 886-residue chain is Alanine--tRNA ligase (886 aa).

Positions 568, 572, 670, and 674 each coordinate Zn(2+).

This sequence belongs to the class-II aminoacyl-tRNA synthetase family. The cofactor is Zn(2+).

It localises to the cytoplasm. The enzyme catalyses tRNA(Ala) + L-alanine + ATP = L-alanyl-tRNA(Ala) + AMP + diphosphate. Catalyzes the attachment of alanine to tRNA(Ala) in a two-step reaction: alanine is first activated by ATP to form Ala-AMP and then transferred to the acceptor end of tRNA(Ala). Also edits incorrectly charged Ser-tRNA(Ala) and Gly-tRNA(Ala) via its editing domain. In Prochlorococcus marinus (strain NATL1A), this protein is Alanine--tRNA ligase.